The sequence spans 639 residues: 3D-(3,5/4)-trihydroxycyclohexane-1,2-dione hydrolase (639 aa).

A thiamine diphosphate-binding site is contributed by glutamate 62. Residues 438 to 518 form a thiamine pyrophosphate binding region; the sequence is SLPGDLQRMW…INILLFDNCG (81 aa). Residues aspartate 489 and asparagine 516 each coordinate Mg(2+).

It belongs to the TPP enzyme family. The cofactor is Mg(2+). It depends on thiamine diphosphate as a cofactor.

It carries out the reaction 3D-3,5/4-trihydroxycyclohexane-1,2-dione + H2O = 5-deoxy-D-glucuronate + H(+). It participates in polyol metabolism; myo-inositol degradation into acetyl-CoA; acetyl-CoA from myo-inositol: step 3/7. In terms of biological role, involved in the cleavage of the C1-C2 bond of 3D-(3,5/4)-trihydroxycyclohexane-1,2-dione (THcHDO) to yield 5-deoxy-glucuronate (5DG). In Clostridium perfringens (strain 13 / Type A), this protein is 3D-(3,5/4)-trihydroxycyclohexane-1,2-dione hydrolase.